The primary structure comprises 266 residues: PDZ domain-containing protein 9 (266 aa).

Residues lysine 27–arginine 109 enclose the PDZ domain.

The protein is PDZ domain-containing protein 9 (Pdzd9) of Mus musculus (Mouse).